The primary structure comprises 362 residues: DNA replication and repair protein RecF (362 aa).

Position 30–37 (30–37 (GDNAQGKT)) interacts with ATP.

This sequence belongs to the RecF family.

The protein localises to the cytoplasm. The RecF protein is involved in DNA metabolism; it is required for DNA replication and normal SOS inducibility. RecF binds preferentially to single-stranded, linear DNA. It also seems to bind ATP. The polypeptide is DNA replication and repair protein RecF (Agathobacter rectalis (strain ATCC 33656 / DSM 3377 / JCM 17463 / KCTC 5835 / VPI 0990) (Eubacterium rectale)).